The sequence spans 897 residues: Leucine--tRNA ligase (897 aa).

Residues 49-59 (PYPSGKLHMGH) carry the 'HIGH' region motif. The 'KMSKS' region motif lies at 654–658 (KMSKS). An ATP-binding site is contributed by lysine 657.

It belongs to the class-I aminoacyl-tRNA synthetase family.

Its subcellular location is the cytoplasm. It catalyses the reaction tRNA(Leu) + L-leucine + ATP = L-leucyl-tRNA(Leu) + AMP + diphosphate. The chain is Leucine--tRNA ligase from Methylibium petroleiphilum (strain ATCC BAA-1232 / LMG 22953 / PM1).